Reading from the N-terminus, the 54-residue chain is Phosphoribosylformylglycinamidine synthase subunit PurQ (54 aa).

A Glutamine amidotransferase type-1 domain is found at 1–51 (MHDIAGVTNETGNVLGMMPHPERAVEALLGGTDGLGVFQSLINQTEGADVR). Active-site residues include histidine 20 and glutamate 22.

In terms of assembly, part of the FGAM synthase complex composed of 1 PurL, 1 PurQ and 2 PurS subunits.

The protein localises to the cytoplasm. The enzyme catalyses N(2)-formyl-N(1)-(5-phospho-beta-D-ribosyl)glycinamide + L-glutamine + ATP + H2O = 2-formamido-N(1)-(5-O-phospho-beta-D-ribosyl)acetamidine + L-glutamate + ADP + phosphate + H(+). It carries out the reaction L-glutamine + H2O = L-glutamate + NH4(+). The protein operates within purine metabolism; IMP biosynthesis via de novo pathway; 5-amino-1-(5-phospho-D-ribosyl)imidazole from N(2)-formyl-N(1)-(5-phospho-D-ribosyl)glycinamide: step 1/2. Part of the phosphoribosylformylglycinamidine synthase complex involved in the purines biosynthetic pathway. Catalyzes the ATP-dependent conversion of formylglycinamide ribonucleotide (FGAR) and glutamine to yield formylglycinamidine ribonucleotide (FGAM) and glutamate. The FGAM synthase complex is composed of three subunits. PurQ produces an ammonia molecule by converting glutamine to glutamate. PurL transfers the ammonia molecule to FGAR to form FGAM in an ATP-dependent manner. PurS interacts with PurQ and PurL and is thought to assist in the transfer of the ammonia molecule from PurQ to PurL. This Lacticaseibacillus casei (Lactobacillus casei) protein is Phosphoribosylformylglycinamidine synthase subunit PurQ (purQ).